A 602-amino-acid polypeptide reads, in one-letter code: uncharacterized protein (602 aa).

Belongs to the IIV-6 098R family.

This is an uncharacterized protein from Acheta domesticus (House cricket).